We begin with the raw amino-acid sequence, 534 residues long: Cytokinin dehydrogenase 5 (534 aa).

The N-terminal stretch at 1–20 (MAWCLVFMVFLIYCLISTVG) is a signal peptide. The FAD-binding PCMH-type domain occupies 59 to 243 (TSAEPLAVFH…TRARIALEPA (185 aa)). 3 residues coordinate FAD: Ala-93, Gly-95, and Gly-97. Residue His-98 is modified to Pros-8alpha-FAD histidine. FAD contacts are provided by Ser-99 and Gln-103. Asn-152 carries N-linked (GlcNAc...) asparagine glycosylation. Residues Asp-167, Ser-172, Ser-178, Ile-182, and Ile-233 each coordinate FAD. Asn-256 carries an N-linked (GlcNAc...) asparagine glycan. Tyr-484 and Gln-522 together coordinate FAD.

Belongs to the oxygen-dependent FAD-linked oxidoreductase family. Monomer. The cofactor is FAD. As to expression, expressed in inflorescence meristems.

The protein localises to the secreted. The protein resides in the extracellular space. The enzyme catalyses N(6)-dimethylallyladenine + A + H2O = 3-methyl-2-butenal + adenine + AH2. Catalyzes the oxidation of cytokinins, a family of N(6)-substituted adenine derivatives that are plant hormones, where the substituent is an isopentenyl group. The chain is Cytokinin dehydrogenase 5 (CKX5) from Oryza sativa subsp. japonica (Rice).